We begin with the raw amino-acid sequence, 560 residues long: NRAMP-like transporter smf-3 (560 aa).

The Cytoplasmic segment spans residues 1–43 (MEGEMKCPIEEIREKPEMRKAQQTYEVQVEVEDTPDTTFSWRK). The helical transmembrane segment at 44 to 64 (LWAFTGPGFLMSIAYLDPGNI) threads the bilayer. Topologically, residues 65 to 71 (ESDLQAG) are extracellular. A helical membrane pass occupies residues 72–92 (AISYFKLIWVLLVAHIMGLLL). Residues 93–120 (QRLAARLGVVSGKHMAEIAFSYYPKIPR) are Cytoplasmic-facing. Residues 121 to 141 (LVLWMLVESAIVGSDMQEVIG) traverse the membrane as a helical segment. Residues 142-152 (TAISFYLLSNG) lie on the Extracellular side of the membrane. A helical transmembrane segment spans residues 153 to 173 (VIPLWAGVLITICDTFTFLFL). The Cytoplasmic segment spans residues 174-182 (EKYGVRKFE). Residues 183-203 (AFFCFLITCMAITFGYEFGVS) form a helical membrane-spanning segment. At 204 to 229 (APDAGKMFSGMFVPWCNGCDNNMVMQ) the chain is on the extracellular side. The helical transmembrane segment at 230–250 (GVAIIGAVIMPHNFYLHSALV) threads the bilayer. Topologically, residues 251 to 268 (KSRRVDRRRAEKVTEANK) are cytoplasmic. A helical membrane pass occupies residues 269 to 289 (YFFIESAFALFVSFIINTLVI). At 290–339 (SVFAQGMYGKTNQDIRDTCYNNTHNGMPDFYKVEFPANNDAAQSDIYHAG) the chain is on the extracellular side. Asparagine 310 is a glycosylation site (N-linked (GlcNAc...) asparagine). A helical transmembrane segment spans residues 340–360 (IFLGCTFGIFALYVWAVGILA). Residues 361–390 (AGQSSTMTGTYAGQFAMEGFIQIKLPQWKR) are Cytoplasmic-facing. A helical membrane pass occupies residues 391 to 411 (ILITRSLAILPTLAVVIFSGG). Residues 412–420 (IDNISSLND) lie on the Extracellular side of the membrane. Residue asparagine 414 is glycosylated (N-linked (GlcNAc...) asparagine). Residues 421–441 (FLNCLQLIQLPFALIPVLTFV) traverse the membrane as a helical segment. Residues 442 to 458 (SDRNIMHEYKLASVSKV) are Cytoplasmic-facing. The chain crosses the membrane as a helical span at residues 459-479 (VSIVISLIILFINFYFLYSWI). The Extracellular portion of the chain corresponds to 480–486 (GSTFGYN). The chain crosses the membrane as a helical span at residues 487–507 (AVSIPITIFCAIFYIIFIAYL). The Cytoplasmic segment spans residues 508 to 560 (TYYCLVAMEFISPIQTKWLAEPIYHDFDAPWLEDSENPSTKNTISDDELSMRY).

This sequence belongs to the NRAMP family. As to expression, expressed in dopaminergic neurons (at protein level). Expressed in intestine with a weaker expression in the most proximal and distal regions. Weakly expressed in the hyp1-6, hyp7 and hyp8-12 hypodermis and in head and tail neurons.

It is found in the apical cell membrane. It localises to the cytoplasmic vesicle membrane. In terms of biological role, probable divalent metal ion transporter which regulates the uptake of several heavy metals such as Mn(2+), Al(3+) and iron. Plays a role in modulating Al(3+)-induced dopamine (DA) neuron degeneration through the intracellular sequestration of Al(3+). The sequence is that of NRAMP-like transporter smf-3 from Caenorhabditis elegans.